The chain runs to 294 residues: Small ribosomal subunit protein uS2 (294 aa).

Basic and acidic residues predominate over residues 256 to 274 (SGKFIMDEDPDSKKTKTAE). Residues 256–294 (SGKFIMDEDPDSKKTKTAEEPSATIEPSTTTTVEVDQNE) form a disordered region. Residues 280–294 (IEPSTTTTVEVDQNE) show a composition bias toward polar residues.

It belongs to the universal ribosomal protein uS2 family.

The protein is Small ribosomal subunit protein uS2 of Leptospira interrogans serogroup Icterohaemorrhagiae serovar Lai (strain 56601).